The chain runs to 541 residues: Chaperonin GroEL 1 (541 aa).

ATP-binding positions include 29-32 (TLGP), 86-90 (DGTTT), Gly413, and Asp492.

This sequence belongs to the chaperonin (HSP60) family. Forms a cylinder of 14 subunits composed of two heptameric rings stacked back-to-back. Interacts with the co-chaperonin GroES.

Its subcellular location is the cytoplasm. It carries out the reaction ATP + H2O + a folded polypeptide = ADP + phosphate + an unfolded polypeptide.. Functionally, together with its co-chaperonin GroES, plays an essential role in assisting protein folding. The GroEL-GroES system forms a nano-cage that allows encapsulation of the non-native substrate proteins and provides a physical environment optimized to promote and accelerate protein folding. The polypeptide is Chaperonin GroEL 1 (Rhodococcus jostii (strain RHA1)).